The sequence spans 153 residues: uncharacterized protein (153 aa).

Ala-2 is subject to N-acetylalanine.

This is an uncharacterized protein from Arabidopsis thaliana (Mouse-ear cress).